The following is a 649-amino-acid chain: Replication factor C small subunit (649 aa).

ATP is bound at residue 55–385; sequence GPAGVGKCVT…GCIPTVMHNT (331 aa).

Belongs to the activator 1 small subunits family. RfcS subfamily. As to quaternary structure, heteromultimer composed of small subunits (RfcS) and large subunits (RfcL). In terms of processing, this protein undergoes a protein self splicing that involves a post-translational excision of the intervening region (intein) followed by peptide ligation.

In terms of biological role, part of the RFC clamp loader complex which loads the PCNA sliding clamp onto DNA. This is Replication factor C small subunit (rfcS) from Haloquadratum walsbyi (strain DSM 16790 / HBSQ001).